The chain runs to 141 residues: Nucleoside triphosphatase NudI (141 aa).

Residues M1–L141 enclose the Nudix hydrolase domain. Residues G38 to G59 carry the Nudix box motif.

Belongs to the Nudix hydrolase family. NudI subfamily. Monomer. Requires Mg(2+) as cofactor.

It catalyses the reaction a ribonucleoside 5'-triphosphate + H2O = a ribonucleoside 5'-phosphate + diphosphate + H(+). The enzyme catalyses a 2'-deoxyribonucleoside 5'-triphosphate + H2O = a 2'-deoxyribonucleoside 5'-phosphate + diphosphate + H(+). The catalysed reaction is dUTP + H2O = dUMP + diphosphate + H(+). It carries out the reaction dTTP + H2O = dTMP + diphosphate + H(+). It catalyses the reaction dCTP + H2O = dCMP + diphosphate + H(+). Its function is as follows. Catalyzes the hydrolysis of nucleoside triphosphates, with a preference for pyrimidine deoxynucleoside triphosphates (dUTP, dTTP and dCTP). In Salmonella newport (strain SL254), this protein is Nucleoside triphosphatase NudI.